The sequence spans 848 residues: Translation initiation factor IF-2 (848 aa).

The tract at residues 90-253 (RTYIKRAELQ…PKEKRHAFER (164 aa)) is disordered. Positions 105–170 (EAPAPEEPVQ…SAEPAIAPED (66 aa)) are enriched in low complexity. Composition is skewed to basic residues over residues 204–215 (PKKKQAGHRGPR) and 236–248 (KPLR…KEKR). The region spanning 344-511 (KRAPVVSVMG…AVLLQAEILE (168 aa)) is the tr-type G domain. Residues 353-360 (GHVDHGKT) are G1. 353–360 (GHVDHGKT) is a binding site for GTP. The tract at residues 378-382 (GITQH) is G2. The interval 399-402 (DTPG) is G3. GTP is bound by residues 399–403 (DTPGH) and 453–456 (NKMD). Positions 453 to 456 (NKMD) are G4. Residues 489–491 (SAH) are G5.

The protein belongs to the TRAFAC class translation factor GTPase superfamily. Classic translation factor GTPase family. IF-2 subfamily.

The protein resides in the cytoplasm. One of the essential components for the initiation of protein synthesis. Protects formylmethionyl-tRNA from spontaneous hydrolysis and promotes its binding to the 30S ribosomal subunits. Also involved in the hydrolysis of GTP during the formation of the 70S ribosomal complex. The protein is Translation initiation factor IF-2 of Marinobacter nauticus (strain ATCC 700491 / DSM 11845 / VT8) (Marinobacter aquaeolei).